Consider the following 230-residue polypeptide: Bidirectional sugar transporter SWEET16 (230 aa).

Residues 1–3 (MAD) are Extracellular-facing. Residues 4-24 (LSFYVGVIGNVISVLVFLSPV) form a helical membrane-spanning segment. The MtN3/slv 1 domain maps to 6 to 92 (FYVGVIGNVI…LIFLFFVPKS (87 aa)). The Cytoplasmic segment spans residues 25–40 (ETFWRIVQRRSTEEYE). Residues 41–61 (CFPYICTLMSSSLWTYYGIVT) traverse the membrane as a helical segment. The Extracellular segment spans residues 62–69 (PGEYLVST). The helical transmembrane segment at 70 to 90 (VNGFGALAESIYVLIFLFFVP) threads the bilayer. Over 91–93 (KSR) the chain is Cytoplasmic. Residues 94-114 (FLKTVVVVLALNVCFPVIAIA) traverse the membrane as a helical segment. Residues 115–128 (GTRTLFGDANSRSS) are Extracellular-facing. The chain crosses the membrane as a helical span at residues 129–149 (SMGFICATLNIIMYGSPLSAI). Positions 129 to 212 (SMGFICATLN…LLIYAYYRNA (84 aa)) constitute a MtN3/slv 2 domain. Residues 150–162 (KTVVTTRSVQFMP) lie on the Cytoplasmic side of the membrane. The chain crosses the membrane as a helical span at residues 163–183 (FWLSFFLFLNGAIWGVYALLL). Residues 184-185 (HD) are Extracellular-facing. Residues 186–206 (MFLLVPNGMGFFLGIMQLLIY) form a helical membrane-spanning segment. The Cytoplasmic portion of the chain corresponds to 207 to 230 (AYYRNAEPIVEDEEGLIPNQPLLA).

The protein belongs to the SWEET sugar transporter family. As to quaternary structure, forms homooligomers and heterooligomers with SWEET1, SWEET7, SWEET8, SWEET9 and SWEET17. Mostly expressed in the cortex of mature roots, and, to a lower extent, in aerial organs such as leaves, stems, and flowers. Mainly present in vascular parenchyma cells, especially in the petiole vasculature, flower stalks and at the base of individual, not fully developed flowers.

It is found in the vacuole membrane. Its function is as follows. Mediates both low-affinity uptake and efflux of sugar across the vacuolar membrane. Regulates sugars homeostasis in leaves and roots by exporting/importing them through the tonoplast regarding metabolic demand. Acts as a vacuolar hexose transporter, such as glucose (Glc), fructose (Fru), and sucrose (Suc). This chain is Bidirectional sugar transporter SWEET16, found in Arabidopsis thaliana (Mouse-ear cress).